Consider the following 134-residue polypeptide: Retinol-binding protein 2 (134 aa).

Positions 41 and 109 each coordinate all-trans-retinol.

This sequence belongs to the calycin superfamily. Fatty-acid binding protein (FABP) family. In terms of tissue distribution, expressed in prenatal liver, intestine and lung, and in adult intestine.

Its subcellular location is the cytoplasm. Functionally, intracellular transport of retinol. In Mus musculus (Mouse), this protein is Retinol-binding protein 2 (Rbp2).